The primary structure comprises 157 residues: Protein-export protein SecB (157 aa).

The protein belongs to the SecB family. In terms of assembly, homotetramer, a dimer of dimers. One homotetramer interacts with 1 SecA dimer.

It localises to the cytoplasm. Its function is as follows. One of the proteins required for the normal export of preproteins out of the cell cytoplasm. It is a molecular chaperone that binds to a subset of precursor proteins, maintaining them in a translocation-competent state. It also specifically binds to its receptor SecA. The protein is Protein-export protein SecB of Proteus mirabilis (strain HI4320).